A 620-amino-acid chain; its full sequence is 1-deoxy-D-xylulose-5-phosphate synthase (620 aa).

Thiamine diphosphate-binding positions include His-80 and 121–123; that span reads GHS. Residue Asp-152 coordinates Mg(2+). Residues 153–154, Asn-181, Tyr-288, and Glu-370 contribute to the thiamine diphosphate site; that span reads GA. Asn-181 contributes to the Mg(2+) binding site.

It belongs to the transketolase family. DXPS subfamily. Homodimer. Requires Mg(2+) as cofactor. It depends on thiamine diphosphate as a cofactor.

It carries out the reaction D-glyceraldehyde 3-phosphate + pyruvate + H(+) = 1-deoxy-D-xylulose 5-phosphate + CO2. Its pathway is metabolic intermediate biosynthesis; 1-deoxy-D-xylulose 5-phosphate biosynthesis; 1-deoxy-D-xylulose 5-phosphate from D-glyceraldehyde 3-phosphate and pyruvate: step 1/1. Catalyzes the acyloin condensation reaction between C atoms 2 and 3 of pyruvate and glyceraldehyde 3-phosphate to yield 1-deoxy-D-xylulose-5-phosphate (DXP). The chain is 1-deoxy-D-xylulose-5-phosphate synthase from Shigella flexneri.